A 277-amino-acid chain; its full sequence is Large ribosomal subunit protein uL2 (277 aa).

Disordered regions lie at residues 1-55 and 217-277; these read MGIR…RHQG and KRPS…KKKR. Residues 37–55 are compositionally biased toward basic residues; the sequence is LHSKGGRNGHGRITARHQG.

It belongs to the universal ribosomal protein uL2 family. As to quaternary structure, part of the 50S ribosomal subunit. Forms a bridge to the 30S subunit in the 70S ribosome.

Its function is as follows. One of the primary rRNA binding proteins. Required for association of the 30S and 50S subunits to form the 70S ribosome, for tRNA binding and peptide bond formation. It has been suggested to have peptidyltransferase activity; this is somewhat controversial. Makes several contacts with the 16S rRNA in the 70S ribosome. The protein is Large ribosomal subunit protein uL2 of Thermobifida fusca (strain YX).